An 83-amino-acid chain; its full sequence is Protein L83L (83 aa).

The protein belongs to the asfivirus L83L family. As to quaternary structure, interacts with host IL1B.

The protein localises to the host cytoplasm. Functionally, may subvert the host innate immune response by interacting with host IL1B and interfering with its function. The sequence is that of Protein L83L from Ornithodoros (relapsing fever ticks).